Reading from the N-terminus, the 395-residue chain is Protein NDRG1 (395 aa).

The disordered stretch occupies residues 325 to 395 (RSRTGSAASS…NTPKSMEISC (71 aa)). The span at 326–339 (SRTGSAASSSSQDG) shows a compositional bias: low complexity. A run of 4 repeats spans residues 339 to 348 (GNRSRSHTNE), 349 to 358 (GSRSRSHTGD), 359 to 368 (GNRSRAHTGD), and 369 to 378 (GNRSRSHTDS). A 4 X 10 AA tandem repeats of G-[NS]-R-S-R-[AS]-H-T-[DGN]-[DES] region spans residues 339–378 (GNRSRSHTNEGSRSRSHTGDGNRSRAHTGDGNRSRSHTDS). Over residues 345-376 (HTNEGSRSRSHTGDGNRSRAHTGDGNRSRSHT) the composition is skewed to basic and acidic residues. The span at 377 to 389 (DSNNTNSEHNTPK) shows a compositional bias: polar residues.

This sequence belongs to the NDRG family.

In terms of biological role, may be involved in pronephros development, after specification of the pronephros. The polypeptide is Protein NDRG1 (Xenopus tropicalis (Western clawed frog)).